We begin with the raw amino-acid sequence, 126 residues long: Aspartate 1-decarboxylase (126 aa).

S25 functions as the Schiff-base intermediate with substrate; via pyruvic acid in the catalytic mechanism. The residue at position 25 (S25) is a Pyruvic acid (Ser). Residue T57 coordinates substrate. Y58 functions as the Proton donor in the catalytic mechanism. A substrate-binding site is contributed by 73 to 75 (GAA).

The protein belongs to the PanD family. As to quaternary structure, heterooctamer of four alpha and four beta subunits. Requires pyruvate as cofactor. Post-translationally, is synthesized initially as an inactive proenzyme, which is activated by self-cleavage at a specific serine bond to produce a beta-subunit with a hydroxyl group at its C-terminus and an alpha-subunit with a pyruvoyl group at its N-terminus.

The protein resides in the cytoplasm. It catalyses the reaction L-aspartate + H(+) = beta-alanine + CO2. The protein operates within cofactor biosynthesis; (R)-pantothenate biosynthesis; beta-alanine from L-aspartate: step 1/1. Catalyzes the pyruvoyl-dependent decarboxylation of aspartate to produce beta-alanine. This Erwinia tasmaniensis (strain DSM 17950 / CFBP 7177 / CIP 109463 / NCPPB 4357 / Et1/99) protein is Aspartate 1-decarboxylase.